Consider the following 352-residue polypeptide: Protein-glutamate methylesterase/protein-glutamine glutaminase 1 (352 aa).

The 118-residue stretch at 5–122 folds into the Response regulatory domain; it reads KVLVVDDSAF…SLDVLSVKEE (118 aa). Aspartate 56 bears the 4-aspartylphosphate mark. The CheB-type methylesterase domain occupies 155–352; that stretch reads PDQDRKLNKL…EITEEVLSML (198 aa). Catalysis depends on residues serine 170, histidine 197, and aspartate 297.

Belongs to the CheB family. In terms of processing, phosphorylated by CheA. Phosphorylation of the N-terminal regulatory domain activates the methylesterase activity.

The protein localises to the cytoplasm. It catalyses the reaction [protein]-L-glutamate 5-O-methyl ester + H2O = L-glutamyl-[protein] + methanol + H(+). The catalysed reaction is L-glutaminyl-[protein] + H2O = L-glutamyl-[protein] + NH4(+). Its function is as follows. Involved in chemotaxis. Part of a chemotaxis signal transduction system that modulates chemotaxis in response to various stimuli. Catalyzes the demethylation of specific methylglutamate residues introduced into the chemoreceptors (methyl-accepting chemotaxis proteins or MCP) by CheR. Also mediates the irreversible deamidation of specific glutamine residues to glutamic acid. The polypeptide is Protein-glutamate methylesterase/protein-glutamine glutaminase 1 (Syntrophomonas wolfei subsp. wolfei (strain DSM 2245B / Goettingen)).